The primary structure comprises 524 residues: Na(+)/H(+) antiporter NhaB (524 aa).

Transmembrane regions (helical) follow at residues 13 to 33 (FLGN…IINP), 98 to 118 (LLLV…LFVF), 140 to 160 (AFLS…SVSV), 239 to 259 (FFIR…LVCL), 304 to 324 (AIIG…VGLV), 325 to 345 (GLSV…HSLG), 358 to 378 (LTVF…TPII), 448 to 468 (ATPN…APLI), and 479 to 499 (ALPY…FLLV).

It belongs to the NhaB Na(+)/H(+) (TC 2.A.34) antiporter family.

The protein resides in the cell inner membrane. It carries out the reaction 2 Na(+)(in) + 3 H(+)(out) = 2 Na(+)(out) + 3 H(+)(in). In terms of biological role, na(+)/H(+) antiporter that extrudes sodium in exchange for external protons. The sequence is that of Na(+)/H(+) antiporter NhaB from Yersinia pseudotuberculosis serotype O:3 (strain YPIII).